Reading from the N-terminus, the 550-residue chain is Enhanced filamentous growth protein 1 (550 aa).

Disordered stretches follow at residues 17–48 (NNGMPQQTTAANQQAFPQQQQPTTTGNASQQQ), 72–95 (QGQPGQQTGQTAGQQQQQQQQQQQ), and 123–182 (QLSQ…QPTP). The span at 123–153 (QLSQPQPQHYNGSNRNYTSAPSGAPIPSNST) shows a compositional bias: polar residues. 2 positions are modified to phosphothreonine: threonine 181 and threonine 208. The HTH APSES-type domain maps to 206 to 312 (RVTTTMWEDE…RDIKRVIQTG (107 aa)). Residues 240–261 (GTKLLNVAQMTRGRRDGILKSE) constitute a DNA-binding region (H-T-H motif). Disordered regions lie at residues 329 to 435 (TSAS…STTN) and 476 to 550 (SSYP…KEEK). The segment covering 342 to 383 (AAATTTAATAISKSSSGNGNSISATSGGSNVSGASGAGSTTS) has biased composition (low complexity). Residues 384–394 (PVNTKAATTAG) show a composition bias toward polar residues. A compositionally biased stretch (low complexity) spans 395–416 (TPQGNYYQTYNQQQYPQQYGQY). The span at 420-435 (GKNQNTPASQPGSTTN) shows a compositional bias: polar residues. Over residues 476 to 502 (SSYPYQQQQQKQQQQQPNQQQQSDQQQ) the composition is skewed to low complexity. Residues 514–544 (SVHQSPQVQSLTQGSVHPSPQQHQANQSAST) show a composition bias toward polar residues.

It belongs to the EFG1/PHD1/stuA family. In terms of assembly, interacts with CZF1 and FLO8. In terms of processing, thr-208 is a phosphorylation target to promote hyphal induction by a subset of environmental cues. Phosphorylation at Thr-181 by the CDc28/HGC1 complex represses cell separation genes and leads to hyphal chain formation.

It is found in the nucleus. Transcriptional regulator of the switch between 2 heritable states, the white and opaque states. These 2 cell types differ in many characteristics, including cell structure, mating competence, and virulence. Each state is heritable for many generations, and switching between states occurs stochastically, at low frequency. Antagonizes the action of WOR1, WOR2 and CZF1, and promotes the white state. In white cells, EFG1 represses WOR1 indirectly through WOR2 to maintain white cell identity. Binds target gene promoters at the EFG1 recognition sequence (EGRbox) TATGCATA. Acts as a major regulator of cell wall dynamics and plays a role in interactions with extracellular matrices. Required for TOR1-dependent cellular aggregation and adhesin expression. Required for both normoxic and hypoxic biofilm formation. Hypoxic biofilm formation is a major cause of perseverance and antifungal resistance during infections. Contributes to virulence by regulating hyphal formation and the factors that enable C.albicans to invade and injure endothelial cells. Required for the formation of thick-walled big resting spores called chlamydospores, which survive in unfavorable conditions. Mediates the expression of virulence factors SAP4, SAP5and SAP6 during infection. Involved in drug resistance by regulating the expression of ERG3. The chain is Enhanced filamentous growth protein 1 (EFG1) from Candida albicans (strain SC5314 / ATCC MYA-2876) (Yeast).